The primary structure comprises 132 residues: Small ribosomal subunit protein uS13 (132 aa).

Residues 101-125 show a composition bias toward basic residues; the sequence is RGLPVRGQRTKTNARTRKGPRKTVA. The segment at 101–132 is disordered; it reads RGLPVRGQRTKTNARTRKGPRKTVANKKIETR.

This sequence belongs to the universal ribosomal protein uS13 family. In terms of assembly, part of the 30S ribosomal subunit. Forms a loose heterodimer with protein S19. Forms two bridges to the 50S subunit in the 70S ribosome.

Its function is as follows. Located at the top of the head of the 30S subunit, it contacts several helices of the 16S rRNA. In the 70S ribosome it contacts the 23S rRNA (bridge B1a) and protein L5 of the 50S subunit (bridge B1b), connecting the 2 subunits; these bridges are implicated in subunit movement. Contacts the tRNAs in the A and P-sites. The polypeptide is Small ribosomal subunit protein uS13 (Ureaplasma urealyticum serovar 10 (strain ATCC 33699 / Western)).